The following is a 251-amino-acid chain: Lactose phosphotransferase system repressor (251 aa).

The HTH deoR-type domain maps to 3–58 (KHERLDEIAKLVNKKGTIRTNEIVEGLNVSDMTVRRDLIELENKGILTKIHGGARS). The segment at residues 20-39 (IRTNEIVEGLNVSDMTVRRD) is a DNA-binding region (H-T-H motif).

Repressor of the lactose catabolism operon. Galactose-6-phosphate is the inducer. The polypeptide is Lactose phosphotransferase system repressor (lacR) (Staphylococcus aureus (strain NCTC 8325 / PS 47)).